The sequence spans 431 residues: F-box protein pof14 (431 aa).

An F-box; atypical domain is found at 172–186; that stretch reads CPDEILQLIFSYCYD.

In terms of assembly, component of the E3 ubiquitin ligase Skp1-Cullin-1-F-box (SCF) complex. Interacts with skp1, cul1 and erg9.

Its subcellular location is the cytoplasm. The protein resides in the nucleus. The protein localises to the endoplasmic reticulum. Its function is as follows. Expression is induced during oxidative stress. Plays an essential, SCF-independent, role in the stress response to hydrogen peroxide for survival, by negatively regulating ergosterol synthesis via direct binding to the squalene synthase erg9. The sequence is that of F-box protein pof14 (pof14) from Schizosaccharomyces pombe (strain 972 / ATCC 24843) (Fission yeast).